We begin with the raw amino-acid sequence, 264 residues long: 3-methyl-2-oxobutanoate hydroxymethyltransferase (264 aa).

2 residues coordinate Mg(2+): Asp45 and Asp84. Residues Asp45 to Ser46, Asp84, and Lys112 each bind 3-methyl-2-oxobutanoate. Glu114 serves as a coordination point for Mg(2+). Glu181 functions as the Proton acceptor in the catalytic mechanism.

This sequence belongs to the PanB family. As to quaternary structure, homodecamer; pentamer of dimers. Mg(2+) is required as a cofactor.

It localises to the cytoplasm. The enzyme catalyses 3-methyl-2-oxobutanoate + (6R)-5,10-methylene-5,6,7,8-tetrahydrofolate + H2O = 2-dehydropantoate + (6S)-5,6,7,8-tetrahydrofolate. It functions in the pathway cofactor biosynthesis; (R)-pantothenate biosynthesis; (R)-pantoate from 3-methyl-2-oxobutanoate: step 1/2. Functionally, catalyzes the reversible reaction in which hydroxymethyl group from 5,10-methylenetetrahydrofolate is transferred onto alpha-ketoisovalerate to form ketopantoate. The chain is 3-methyl-2-oxobutanoate hydroxymethyltransferase from Vibrio vulnificus (strain YJ016).